The sequence spans 78 residues: Large ribosomal subunit protein uL23 (78 aa).

It belongs to the universal ribosomal protein uL23 family. In terms of assembly, part of the 50S ribosomal subunit. Contacts protein L29.

In terms of biological role, binds to 23S rRNA. One of the proteins that surrounds the polypeptide exit tunnel on the outside of the ribosome. This is Large ribosomal subunit protein uL23 from Nanoarchaeum equitans (strain Kin4-M).